The following is a 142-amino-acid chain: Large ribosomal subunit protein uL13 (142 aa).

It belongs to the universal ribosomal protein uL13 family. In terms of assembly, part of the 50S ribosomal subunit.

Its function is as follows. This protein is one of the early assembly proteins of the 50S ribosomal subunit, although it is not seen to bind rRNA by itself. It is important during the early stages of 50S assembly. This is Large ribosomal subunit protein uL13 from Burkholderia cenocepacia (strain ATCC BAA-245 / DSM 16553 / LMG 16656 / NCTC 13227 / J2315 / CF5610) (Burkholderia cepacia (strain J2315)).